We begin with the raw amino-acid sequence, 141 residues long: MSQSWQFWALLSAAFAALTAVFAKVGVAQINSDFATLIRTVVILCVIAAIVAATGQWQKPSEIPGRTWLFLALSGLATGASWLAYFRALKLGDAARVAPLDKLSIVMVAIFGVLFLGEKLNLMNWLGVAFIAAGALLLAVF.

5 consecutive transmembrane segments (helical) span residues 7 to 27 (FWAL…KVGV), 34 to 54 (FATL…VAAT), 69 to 89 (LFLA…FRAL), 97 to 117 (VAPL…LFLG), and 121 to 141 (NLMN…LAVF). Residues 14–140 (AFAALTAVFA…IAAGALLLAV (127 aa)) form the EamA domain.

The protein belongs to the EamA transporter family.

The protein localises to the cell membrane. This is an uncharacterized protein from Sinorhizobium sp.